A 411-amino-acid polypeptide reads, in one-letter code: Serine--tRNA ligase (411 aa).

226–228 (TSE) provides a ligand contact to L-serine. 257 to 259 (RKE) is an ATP binding site. E280 provides a ligand contact to L-serine. Residue 344–347 (EISS) participates in ATP binding. Residue S379 coordinates L-serine.

The protein belongs to the class-II aminoacyl-tRNA synthetase family. Type-1 seryl-tRNA synthetase subfamily. As to quaternary structure, homodimer. The tRNA molecule binds across the dimer.

It localises to the cytoplasm. It carries out the reaction tRNA(Ser) + L-serine + ATP = L-seryl-tRNA(Ser) + AMP + diphosphate + H(+). The enzyme catalyses tRNA(Sec) + L-serine + ATP = L-seryl-tRNA(Sec) + AMP + diphosphate + H(+). Its pathway is aminoacyl-tRNA biosynthesis; selenocysteinyl-tRNA(Sec) biosynthesis; L-seryl-tRNA(Sec) from L-serine and tRNA(Sec): step 1/1. In terms of biological role, catalyzes the attachment of serine to tRNA(Ser). Is also able to aminoacylate tRNA(Sec) with serine, to form the misacylated tRNA L-seryl-tRNA(Sec), which will be further converted into selenocysteinyl-tRNA(Sec). The chain is Serine--tRNA ligase from Campylobacter jejuni subsp. doylei (strain ATCC BAA-1458 / RM4099 / 269.97).